A 235-amino-acid polypeptide reads, in one-letter code: RNA pyrophosphohydrolase (235 aa).

The Nudix hydrolase domain maps to 6–149 (GFRPNVGIIL…KREVYQLALS (144 aa)). The short motif at 38 to 59 (GGIKYGETPEQAMFRELHEEVG) is the Nudix box element. The disordered stretch occupies residues 161-235 (APLSPYGRGG…PDDTAPKDNS (75 aa)). Basic and acidic residues predominate over residues 171-196 (QHRERDGRDARDSRERSSDQGGRNEQ). Residues 203–220 (TVTTTTVIVETVSVSAPT) are compositionally biased toward low complexity.

Belongs to the Nudix hydrolase family. RppH subfamily. It depends on a divalent metal cation as a cofactor.

Functionally, accelerates the degradation of transcripts by removing pyrophosphate from the 5'-end of triphosphorylated RNA, leading to a more labile monophosphorylated state that can stimulate subsequent ribonuclease cleavage. This Ralstonia pickettii (strain 12J) protein is RNA pyrophosphohydrolase.